The following is a 177-amino-acid chain: Ribonuclease clavin (177 aa).

Residues 1–27 (MVAIKNLVLVALTAVTALAMPSPLEER) form the signal peptide. 2 cysteine pairs are disulfide-bonded: C33-C175 and C103-C159. H77 is a catalytic residue. A disordered region spans residues 98-117 (WGNSDCDRPPKHSKNGDGKN). Over residues 102 to 117 (DCDRPPKHSKNGDGKN) the composition is skewed to basic and acidic residues. Catalysis depends on E123, which acts as the Proton acceptor. H164 serves as the catalytic Proton donor.

It belongs to the ribonuclease U2 family.

The protein localises to the secreted. Functionally, clavin has the same substrate specificity as alpha-sarcin. It is specific for purines in both single- and double-stranded RNA. Its toxic action on eukaryotic cells is the result of cleavage of a single phosphodiester bond in the 60S subunit of ribosomes. The sequence is that of Ribonuclease clavin (cla) from Aspergillus clavatus (strain ATCC 1007 / CBS 513.65 / DSM 816 / NCTC 3887 / NRRL 1 / QM 1276 / 107).